Here is a 215-residue protein sequence, read N- to C-terminus: dITP/XTP pyrophosphatase (215 aa).

Position 13–18 (13–18) interacts with substrate; sequence THNTGK. D74 functions as the Proton acceptor in the catalytic mechanism. Residue D74 participates in Mg(2+) binding. Substrate is bound by residues S75, 163 to 166, K186, and 199 to 200; these read FGFD and HR.

This sequence belongs to the HAM1 NTPase family. As to quaternary structure, homodimer. Mg(2+) serves as cofactor.

It carries out the reaction XTP + H2O = XMP + diphosphate + H(+). The catalysed reaction is dITP + H2O = dIMP + diphosphate + H(+). It catalyses the reaction ITP + H2O = IMP + diphosphate + H(+). Its function is as follows. Pyrophosphatase that catalyzes the hydrolysis of nucleoside triphosphates to their monophosphate derivatives, with a high preference for the non-canonical purine nucleotides XTP (xanthosine triphosphate), dITP (deoxyinosine triphosphate) and ITP. Seems to function as a house-cleaning enzyme that removes non-canonical purine nucleotides from the nucleotide pool, thus preventing their incorporation into DNA/RNA and avoiding chromosomal lesions. This is dITP/XTP pyrophosphatase from Bartonella quintana (strain Toulouse) (Rochalimaea quintana).